Reading from the N-terminus, the 217-residue chain is MNLVLMGLPGAGKGTQAERIVEDFGIPHISTGDMFRAAMKEETDLGLEAKSYIDKGELVPDEVTIGIVRERLGKNDCDGGFLLDGFPRTVAQAEALEEILKGLGKSIDHVINIQVDKDALMERLTGRRICKNCGATYHLVFNPPAKENVCDKCGGELYQREDDNEATVSTRLEVNMKQTQPLLDFYEDKGYLVNIDGQKHINEVYADIKELLGGRDK.

10–15 serves as a coordination point for ATP; the sequence is GAGKGT. The interval 30–59 is NMP; sequence STGDMFRAAMKEETDLGLEAKSYIDKGELV. AMP-binding positions include Thr31, Arg36, 57-59, 85-88, and Gln92; these read ELV and GFPR. The segment at 126–163 is LID; the sequence is GRRICKNCGATYHLVFNPPAKENVCDKCGGELYQREDD. Position 127 (Arg127) interacts with ATP. Residues Cys130 and Cys133 each contribute to the Zn(2+) site. Residue 136 to 137 coordinates ATP; it reads TY. 2 residues coordinate Zn(2+): Cys150 and Cys153. Arg160 and Arg171 together coordinate AMP. Lys199 provides a ligand contact to ATP.

This sequence belongs to the adenylate kinase family. In terms of assembly, monomer.

The protein localises to the cytoplasm. The catalysed reaction is AMP + ATP = 2 ADP. The protein operates within purine metabolism; AMP biosynthesis via salvage pathway; AMP from ADP: step 1/1. Catalyzes the reversible transfer of the terminal phosphate group between ATP and AMP. Plays an important role in cellular energy homeostasis and in adenine nucleotide metabolism. The polypeptide is Adenylate kinase (Bacillus licheniformis (strain ATCC 14580 / DSM 13 / JCM 2505 / CCUG 7422 / NBRC 12200 / NCIMB 9375 / NCTC 10341 / NRRL NRS-1264 / Gibson 46)).